Reading from the N-terminus, the 159-residue chain is Outer envelope pore protein 16-3, chloroplastic/mitochondrial (159 aa).

An N-acetylmethionine modification is found at M1. A contains beta strands region spans residues 1 to 65 (MDPAEMRYLE…IRTLKMMGTH (65 aa)). 3 consecutive transmembrane segments (helical) span residues 24 to 40 (ITGF…LATW), 62 to 79 (MGTH…YIGV), and 92 to 109 (FYNG…VLGY).

This sequence belongs to the Tim17/Tim22/Tim23 family. Plastid outer envelope porin OEP16 (TC 1.B.30) subfamily. As to quaternary structure, homodimer and oligomers in membrane. Part of both the NADH-ubiquinone oxidoreductase complex I and of the TIM17:23 complex. Interacts with TIM23-2.

The protein localises to the plastid. The protein resides in the chloroplast outer membrane. It localises to the mitochondrion outer membrane. It is found in the mitochondrion inner membrane. In terms of biological role, voltage-dependent high-conductance channel with a slight cation-selectivity; selective for amino acids but excludes triosephosphates or uncharged sugars. Non-essential amino acid-selective channel protein and translocation pore for NADPH:protochlorophyllide oxidoreductase A (PORA) and possibly PORB. The protein is Outer envelope pore protein 16-3, chloroplastic/mitochondrial (OEP163) of Arabidopsis thaliana (Mouse-ear cress).